Reading from the N-terminus, the 591-residue chain is Serine/threonine-protein kinase Nek2 (591 aa).

The region spanning 4-258 (YEVLEQIGKG…AAQLLKHPQL (255 aa)) is the Protein kinase domain. ATP-binding positions include 10-18 (IGKGAFGSA) and Lys-33. The active-site Proton acceptor is the Asp-129. Disordered regions lie at residues 309–331 (LGNE…SSTR), 382–408 (ARNQ…TTPN), and 500–534 (RTDG…DTSS). Polar residues-rich tracts occupy residues 391-408 (TSYN…TTPN) and 504-534 (DNGS…DTSS).

The protein belongs to the protein kinase superfamily. NEK Ser/Thr protein kinase family. NIMA subfamily. As to expression, expressed in anthers, pistils and leaves.

It catalyses the reaction L-seryl-[protein] + ATP = O-phospho-L-seryl-[protein] + ADP + H(+). It carries out the reaction L-threonyl-[protein] + ATP = O-phospho-L-threonyl-[protein] + ADP + H(+). In terms of biological role, may be involved in plant development processes. This Oryza sativa subsp. japonica (Rice) protein is Serine/threonine-protein kinase Nek2.